A 180-amino-acid polypeptide reads, in one-letter code: ATP synthase subunit delta (180 aa).

Belongs to the ATPase delta chain family. As to quaternary structure, F-type ATPases have 2 components, F(1) - the catalytic core - and F(0) - the membrane proton channel. F(1) has five subunits: alpha(3), beta(3), gamma(1), delta(1), epsilon(1). F(0) has three main subunits: a(1), b(2) and c(10-14). The alpha and beta chains form an alternating ring which encloses part of the gamma chain. F(1) is attached to F(0) by a central stalk formed by the gamma and epsilon chains, while a peripheral stalk is formed by the delta and b chains.

The protein localises to the cell inner membrane. Its function is as follows. F(1)F(0) ATP synthase produces ATP from ADP in the presence of a proton or sodium gradient. F-type ATPases consist of two structural domains, F(1) containing the extramembraneous catalytic core and F(0) containing the membrane proton channel, linked together by a central stalk and a peripheral stalk. During catalysis, ATP synthesis in the catalytic domain of F(1) is coupled via a rotary mechanism of the central stalk subunits to proton translocation. Functionally, this protein is part of the stalk that links CF(0) to CF(1). It either transmits conformational changes from CF(0) to CF(1) or is implicated in proton conduction. This chain is ATP synthase subunit delta, found in Geotalea uraniireducens (strain Rf4) (Geobacter uraniireducens).